A 340-amino-acid polypeptide reads, in one-letter code: MGKSIPQYLGQLDIRKSVVSLATGAGAIYLLYKAIKAGIKCKPPLCSNSPICIARLAVERERHGRDSGELRRLLNSLECKQDEYAKSMILHSITRCVYLLEAEASACTTDDIVLLGYMLDDKDNSVKTQALNTLKAFSGIRKFRLKIQEHSIKVLELISTIWDTELHIAGLRLLNNLPLPDYVHPQLRRVMPALMEILQSDYILAQVQAVRLLSYLAQKNDLLYDILNCQVHSNFLNLFQPTQSGSLLYEVLVFAERLSEGRNAPHYHVVKWHYNEQSLHESLFGEESRLADRLLALVIHPEEDVQIQACKVIVSLQYPQDLRARPSSCQPSRSYFKNTE.

An interaction with TBC1D15 region spans residues 1 to 101 (MGKSIPQYLG…SITRCVYLLE (101 aa)). ARM repeat units follow at residues 100–139 (LEAE…AFSG), 179–218 (LPDY…YLAQ), and 278–318 (SLHE…SLQY).

As to quaternary structure, interacts with TBC1D15, TBC1D21, GK2 and IMMT. Interacts with VDAC2 and VDAC3 in a TBC1D21-dependent manner. Interacts (via ARM domains) with RBBP4. As to expression, expressed in testis. Highly expressed in the mid-piece of the elongated and late spermatids. Expressed at higher levels in neuroblastoma tissues and cell lines, than those of normal dorsal ganglia (at protein level). Expressed in breast cancer, colon cancer, hepatocellular carcinoma, lung cancer, pancreas cancer, prostate cancer, renal cancer and gastric cancer, but not in their normal counterparts.

Its subcellular location is the nucleus. It is found in the mitochondrion outer membrane. Its function is as follows. Essential for male fertility and sperm mitochondrial sheath formation. Required for proper mitochondrial elongation and coiling along the flagellum during the formation of the mitochondrial sheath. Facilitates the growth and aggressiveness of neuroblastoma cells. Increases the EZH2 activity and H3K27me3 levels in a RBBP4-dependent manner, and facilitates the enrichment of polycomb repressive complex 2 and H3K27me3 on gene promoters, resulting in transcriptional repression of tumor suppressors affecting the proliferation, invasion, and metastasis of tumor cells. The chain is Armadillo repeat-containing protein 12 (ARMC12) from Homo sapiens (Human).